We begin with the raw amino-acid sequence, 78 residues long: MTKAPARKPKKKVCVFCKEGITYVDYKDTNLLRKFISDRGKIRARRVTGNCAQHQRDVATAIKNSREMALLPYTNAAR.

The protein belongs to the bacterial ribosomal protein bS18 family. As to quaternary structure, part of the 30S ribosomal subunit. Forms a tight heterodimer with protein bS6.

Its function is as follows. Binds as a heterodimer with protein bS6 to the central domain of the 16S rRNA, where it helps stabilize the platform of the 30S subunit. The protein is Small ribosomal subunit protein bS18 of Acidothermus cellulolyticus (strain ATCC 43068 / DSM 8971 / 11B).